The chain runs to 350 residues: Small ribosomal subunit biogenesis GTPase RsgA (350 aa).

Residues 1–17 (MSKNKLSKGQQRRVNAN) show a composition bias toward polar residues. The segment at 1–33 (MSKNKLSKGQQRRVNANHQRRLKTSKEKPDYDD) is disordered. The CP-type G domain maps to 104–273 (TSVLTRPDFY…VIDSPGVREF (170 aa)). GTP-binding positions include 160–163 (NKID) and 214–222 (GQSGVGKSS). 4 residues coordinate Zn(2+): C297, C302, H304, and C310.

The protein belongs to the TRAFAC class YlqF/YawG GTPase family. RsgA subfamily. Monomer. Associates with 30S ribosomal subunit, binds 16S rRNA. Zn(2+) is required as a cofactor.

It is found in the cytoplasm. Its function is as follows. One of several proteins that assist in the late maturation steps of the functional core of the 30S ribosomal subunit. Helps release RbfA from mature subunits. May play a role in the assembly of ribosomal proteins into the subunit. Circularly permuted GTPase that catalyzes slow GTP hydrolysis, GTPase activity is stimulated by the 30S ribosomal subunit. This Escherichia coli (strain ATCC 8739 / DSM 1576 / NBRC 3972 / NCIMB 8545 / WDCM 00012 / Crooks) protein is Small ribosomal subunit biogenesis GTPase RsgA.